Reading from the N-terminus, the 971-residue chain is uncharacterized protein (971 aa).

This is an uncharacterized protein from Borreliella burgdorferi (strain ATCC 35210 / DSM 4680 / CIP 102532 / B31) (Borrelia burgdorferi).